The primary structure comprises 391 residues: GTPase Obg (391 aa).

Residues 1 to 159 form the Obg domain; it reads MKFVDEASIL…RDLLLELMLL (159 aa). The disordered stretch occupies residues 127–147; that stretch reads NTRFKSSVNRTPRQKTNGTPG. Polar residues predominate over residues 129–145; that stretch reads RFKSSVNRTPRQKTNGT. The region spanning 160–333 is the OBG-type G domain; it reads ADVGMLGMPN…LCWDVMTFII (174 aa). GTP is bound by residues 166–173, 191–195, 213–216, 283–286, and 314–316; these read GMPNAGKS, FTTLV, DIPG, NKID, and SAA. Residues Ser-173 and Thr-193 each contribute to the Mg(2+) site.

This sequence belongs to the TRAFAC class OBG-HflX-like GTPase superfamily. OBG GTPase family. As to quaternary structure, monomer. It depends on Mg(2+) as a cofactor.

It localises to the cytoplasm. An essential GTPase which binds GTP, GDP and possibly (p)ppGpp with moderate affinity, with high nucleotide exchange rates and a fairly low GTP hydrolysis rate. Plays a role in control of the cell cycle, stress response, ribosome biogenesis and in those bacteria that undergo differentiation, in morphogenesis control. The protein is GTPase Obg of Salmonella arizonae (strain ATCC BAA-731 / CDC346-86 / RSK2980).